The primary structure comprises 309 residues: Ribosomal RNA small subunit methyltransferase H (309 aa).

S-adenosyl-L-methionine-binding positions include 33-35 (GGH), aspartate 53, phenylalanine 79, aspartate 100, and glutamine 107.

It belongs to the methyltransferase superfamily. RsmH family.

Its subcellular location is the cytoplasm. The catalysed reaction is cytidine(1402) in 16S rRNA + S-adenosyl-L-methionine = N(4)-methylcytidine(1402) in 16S rRNA + S-adenosyl-L-homocysteine + H(+). Its function is as follows. Specifically methylates the N4 position of cytidine in position 1402 (C1402) of 16S rRNA. This Clostridium botulinum (strain Loch Maree / Type A3) protein is Ribosomal RNA small subunit methyltransferase H.